We begin with the raw amino-acid sequence, 179 residues long: Large ribosomal subunit protein uL5 (179 aa).

The protein belongs to the universal ribosomal protein uL5 family. Part of the 50S ribosomal subunit; part of the 5S rRNA/L5/L18/L25 subcomplex. Contacts the 5S rRNA and the P site tRNA. Forms a bridge to the 30S subunit in the 70S ribosome.

Its function is as follows. This is one of the proteins that bind and probably mediate the attachment of the 5S RNA into the large ribosomal subunit, where it forms part of the central protuberance. In the 70S ribosome it contacts protein S13 of the 30S subunit (bridge B1b), connecting the 2 subunits; this bridge is implicated in subunit movement. Contacts the P site tRNA; the 5S rRNA and some of its associated proteins might help stabilize positioning of ribosome-bound tRNAs. This is Large ribosomal subunit protein uL5 from Prochlorococcus marinus (strain MIT 9215).